The primary structure comprises 246 residues: Transmembrane and ubiquitin-like domain-containing protein 1 (246 aa).

Residues 2-30 (TLIEGVGDEVTVLFSVLACLLVLALAWVS) are required to release iHOPS from membranes. The helical transmembrane segment at 11–31 (VTVLFSVLACLLVLALAWVST) threads the bilayer. The disordered stretch occupies residues 34–101 (AEGGDPLPQP…TPPAPDSPQE (68 aa)). The segment covering 40-50 (LPQPSGTPTPS) has biased composition (pro residues). Residue Thr-71 is modified to Phosphothreonine. Ser-73 carries the phosphoserine modification. Phosphothreonine is present on Thr-92. Phosphoserine occurs at positions 98 and 127. The Ubiquitin-like domain maps to 103–176 (LVLRLKFLND…LHCHVSTRVG (74 aa)). 2 helical membrane passes run 195-215 (IGSL…YCQI) and 221-241 (FPLT…LLAF).

Interacts with EEF1A1, GRIA2, GRIP1, CAMLG, TUBG1. Interacts with NPM1 and CDKN2A; TMUB1 can enhance interaction between NPM1 and CDKN2A and is proposed to bridge the proteins; proposed to be mediated by iHOPS. Interacts with ERLIN2 and AMFR; TMUB1 promotes the interaction of ERLIN2 with AMFR. In terms of processing, processed by regulated intramembrane proteolysis (RIP)in the N-terminus to release iHOPS from membranes. In terms of tissue distribution, ubiquitously expressed with highest levels in mammary and thyroid glands, bone marrow and spleen; limited expression in cardiac, pancreatic and ovarian tissues.

It localises to the membrane. The protein localises to the postsynaptic cell membrane. Its subcellular location is the recycling endosome. It is found in the cytoplasm. The protein resides in the nucleus. It localises to the nucleolus. The protein localises to the cytoskeleton. Its subcellular location is the microtubule organizing center. It is found in the centrosome. Its function is as follows. Involved in sterol-regulated ubiquitination and degradation of HMG-CoA reductase HMGCR. Involved in positive regulation of AMPA-selective glutamate receptor GRIA2 recycling to the cell surface. Acts as a negative regulator of hepatocyte growth during regeneration. May contribute to the regulation of translation during cell-cycle progression. May contribute to the regulation of cell proliferation. May be involved in centrosome assembly. Modulates stabilization and nucleolar localization of tumor suppressor CDKN2A and enhances association between CDKN2A and NPM1. The chain is Transmembrane and ubiquitin-like domain-containing protein 1 (TMUB1) from Homo sapiens (Human).